Reading from the N-terminus, the 40-residue chain is Alpha-conotoxin-like Qc1.1c (40 aa).

Residues 1–19 constitute a propeptide that is removed on maturation; the sequence is SDGRNTAANDKASNLMALR. Disulfide bonds link cysteine 22–cysteine 28 and cysteine 23–cysteine 36. The tract at residues 24 to 26 is lacks the Ser-Xaa-Pro motif that is crucial for potent interaction with nAChR; it reads PNP.

This sequence belongs to the conotoxin A superfamily. In terms of tissue distribution, expressed by the venom duct.

It localises to the secreted. Alpha-conotoxins act on postsynaptic membranes, they bind to the nicotinic acetylcholine receptors (nAChR) and thus inhibit them. Has possibly a distinct nAChR binding mode from other alpha-conotoxins, due to a different three residue motif (lacks the Ser-Xaa-Pro motif). The chain is Alpha-conotoxin-like Qc1.1c from Conus quercinus (Oak cone).